Here is a 162-residue protein sequence, read N- to C-terminus: Inorganic pyrophosphatase (162 aa).

Residue glutamate 8 coordinates Mg(2+). Substrate is bound by residues lysine 16, arginine 30, and tyrosine 42. Residues aspartate 52, aspartate 57, aspartate 84, and aspartate 89 each contribute to the Mg(2+) site. Aspartate 89 functions as the Proton acceptor in the catalytic mechanism. Residue tyrosine 126 participates in substrate binding.

Belongs to the PPase family. As to quaternary structure, homohexamer. It depends on Mg(2+) as a cofactor.

The protein localises to the cytoplasm. The catalysed reaction is diphosphate + H2O = 2 phosphate + H(+). In terms of biological role, catalyzes the hydrolysis of inorganic pyrophosphate (PPi) forming two phosphate ions. The sequence is that of Inorganic pyrophosphatase from Mycobacterium bovis (strain ATCC BAA-935 / AF2122/97).